Here is a 1022-residue protein sequence, read N- to C-terminus: D-2-hydroxyglutarate dehydrogenase (1022 aa).

In terms of domain architecture, FAD-binding PCMH-type spans 53-286 (YQLLPDAVLF…SEARLDITPL (234 aa)). Arg-407 and His-505 together coordinate (R)-2-hydroxyglutarate. Residues 667-700 (FSHEVKEAMSGCLACKACSTQCPIKIDVPAFRSR) enclose the 4Fe-4S ferredoxin-type domain. The [4Fe-4S] cluster site is built by Cys-678, Cys-681, Cys-684, and Cys-688.

This sequence in the N-terminal section; belongs to the FAD-binding oxidoreductase/transferase type 4 family. In terms of assembly, homotetramer. The cofactor is [4Fe-4S] cluster. FAD is required as a cofactor.

It carries out the reaction (R)-2-hydroxyglutarate + A = 2-oxoglutarate + AH2. Activity is completely inhibited by the addition of 0.5 mM Mn(2+), Ni(2+), or Co(2+) and partially inhibited by 0.5 mM Zn(2+). Functionally, catalyzes the oxidation of D-2-hydroxyglutarate (D-2-HGA) to 2-oxoglutarate. Appears to be the only D2HGDH in P.ananatis, providing the way to recycle D-2-HGA produced during L-serine synthesis by SerA, by converting it back to 2-oxoglutarate. Is involved in the utilization of D-2-HGA, that can support the growth of P.ananatis as a sole carbon source, although it barely serves as a good substrate. The physiological molecule that functions as the primary electron acceptor during D-2-HGA oxidation by YdiJ in P.ananatis is unknown. Shows strict substrate specificity towards D-2-HGA, since it has no detectable activity on L-2-hydroxyglutarate, L-malate, D-malate, L-lactate, D-lactate, L-tartrate, D-tartrate, L-glycerate, D-glycerate, glutarate, or pyruvate. This Pantoea ananatis (strain AJ13355) protein is D-2-hydroxyglutarate dehydrogenase.